The chain runs to 251 residues: Glucosamine-6-phosphate deaminase (251 aa).

Residue Asp73 is the Proton acceptor; for enolization step of the active site. The active-site For ring-opening step is Asn142. The active-site Proton acceptor; for ring-opening step is His144. Catalysis depends on Glu149, which acts as the For ring-opening step.

It belongs to the glucosamine/galactosamine-6-phosphate isomerase family. NagB subfamily.

The enzyme catalyses alpha-D-glucosamine 6-phosphate + H2O = beta-D-fructose 6-phosphate + NH4(+). It functions in the pathway amino-sugar metabolism; N-acetylneuraminate degradation; D-fructose 6-phosphate from N-acetylneuraminate: step 5/5. Functionally, catalyzes the reversible isomerization-deamination of glucosamine 6-phosphate (GlcN6P) to form fructose 6-phosphate (Fru6P) and ammonium ion. The chain is Glucosamine-6-phosphate deaminase from Rhodopirellula baltica (strain DSM 10527 / NCIMB 13988 / SH1).